Consider the following 388-residue polypeptide: N-acetylneuraminate epimerase (388 aa).

An N-terminal signal peptide occupies residues Met-1–Ala-26. Kelch repeat units lie at residues Met-48–Gly-92, Lys-94–Ala-147, Gly-149–Asp-186, Ser-187–Gly-232, Phe-236–Ala-285, Ala-307–Gly-356, and Leu-358–Glu-387. Glu-242 functions as the Proton acceptor in the catalytic mechanism.

The protein belongs to the NanM family. In terms of assembly, homodimer.

The protein localises to the periplasm. It catalyses the reaction N-acetyl-alpha-neuraminate = N-acetyl-beta-neuraminate. In terms of biological role, converts alpha-N-acetylneuranimic acid (Neu5Ac) to the beta-anomer, accelerating the equilibrium between the alpha- and beta-anomers. Probably facilitates sialidase-negative bacteria to compete successfully for limited amounts of extracellular Neu5Ac, which is likely taken up in the beta-anomer. In addition, the rapid removal of sialic acid from solution might be advantageous to the bacterium to damp down host responses. The polypeptide is N-acetylneuraminate epimerase (Brucella melitensis biotype 1 (strain ATCC 23456 / CCUG 17765 / NCTC 10094 / 16M)).